The primary structure comprises 922 residues: MDGKRKIEHTADGTHYDATSNVKRKPIFPPFIADSLSEATEKANVMGGGMNSRLQILSEMSKRVQATAPISSLEHFKQLSDISPSFTSSANSINQPYNYSGSLENLVPTPSAGTPSQFMDAQNPYGAVYNALSQFSETEPKMPSYMDDEEASDSLPLSLSSQSLSSQVTNQKPAPHRLTMRERYAANNLTNGLQFTLPLSSRKTYEPEADDDSNDDMYSDDDSNADRWASRIDTAALKEEVLKYMNRCSTQDLADMTGCTLAEAEFMVAKRPFPDLESALVVKQPRPVIPKGRRGRREKTPLGPRLVGICMEIMRGYFVVDALIRQCEQLGGKIQRGIEAWGLSNTATSDEGETSLVNFDQMKSFGTPANSSFITTPPASFSPDIKLQDYQIIGINWLYLLYELKLAGILADEMGLGKTCQTIAFFSLLMDKNINGPHLVIAPASTMENWLREFAKFCPKLKIELYYGSQVEREEIRERINSNKDSYNVMLTTYRLAATSKADRLFLRNQKFNVCVYDEGHYLKNRASERYRHLMSIPADFRVLLTGTPLQNNLKELISLLAFILPHVFDYGLKSLDVIFTMKKSPESDFERALLSEQRVSRAKMMMAPFVLRRKKSQVLDALPKKTRIIEFCEFSEEERRRYDDFASKQSVNSLLDENVMKTNLDTNANLAKKKSTAGFVLVQLRKLADHPMLFRIHYKDDILRQMAKAIMNEPQYKKANELYIFEDMQYMSDIELHNLCCKFPSINSFQLKDEPWMDATKVRKLKKLLTNAVENGDRVVLFSQFTQVLDILQLVMKSLNLKFLRFDGSTQVDFRQDLIDQFYADESINVFLLSTKAGGFGINLACANMVILYDVSFNPFDDLQAEDRAHRVGQKKEVTVYKFVVKDTIEEHIQRLANAKIALDATLSGNAETVEAEDDDD.

Disordered stretches follow at residues 139–177 (EPKMPSYMDDEEASDSLPLSLSSQSLSSQVTNQKPAPHR) and 198–224 (PLSSRKTYEPEADDDSNDDMYSDDDSN). Residues 153–166 (DSLPLSLSSQSLSS) are compositionally biased toward low complexity. Residues 207 to 223 (PEADDDSNDDMYSDDDS) show a composition bias toward acidic residues. 2 positions are modified to phosphoserine: serine 213 and serine 219. Residues 399–567 (YLLYELKLAG…ISLLAFILPH (169 aa)) enclose the Helicase ATP-binding domain. 412-419 (DEMGLGKT) is a binding site for ATP. The DEGH box motif lies at 518–521 (DEGH). Serine 617 is subject to Phosphoserine. The region spanning 765–922 (KLKKLLTNAV…ETVEAEDDDD (158 aa)) is the Helicase C-terminal domain.

It belongs to the SNF2/RAD54 helicase family. As to quaternary structure, interacts with the GDP-bound form of spi1.

It is found in the nucleus. The protein resides in the chromosome. It carries out the reaction ATP + H2O = ADP + phosphate + H(+). DNA helicase that possesses intrinsic ATP-dependent nucleosome-remodeling activity and is required for heterochromatin organization. Required for maintaining a heterochromatin chromatin structure at centromeres and subtelomeres by protecting these regions from euchromatin assembly. Enhances the nucleotide exchange activity of the pim1 guanine nucleotide exchange factor and abolishes histone-H3-mediated RanGAP inhibition. Involved in the construction of the centromeres. The sequence is that of ATP-dependent helicase fft3 (fft3) from Schizosaccharomyces pombe (strain 972 / ATCC 24843) (Fission yeast).